The primary structure comprises 326 residues: tRNA-dihydrouridine(16) synthase (326 aa).

FMN-binding positions include 8 to 10 (PME) and Q69. The active-site Proton donor is the C99. FMN contacts are provided by residues K140, 200 to 202 (NGE), and 224 to 225 (GR).

Belongs to the Dus family. DusC subfamily. FMN serves as cofactor.

The enzyme catalyses 5,6-dihydrouridine(16) in tRNA + NADP(+) = uridine(16) in tRNA + NADPH + H(+). It carries out the reaction 5,6-dihydrouridine(16) in tRNA + NAD(+) = uridine(16) in tRNA + NADH + H(+). In terms of biological role, catalyzes the synthesis of 5,6-dihydrouridine (D), a modified base found in the D-loop of most tRNAs, via the reduction of the C5-C6 double bond in target uridines. Specifically modifies U16 in tRNAs. This is tRNA-dihydrouridine(16) synthase from Ralstonia nicotianae (strain ATCC BAA-1114 / GMI1000) (Ralstonia solanacearum).